We begin with the raw amino-acid sequence, 227 residues long: MIMKTYFSGVSTLGVHSLATEDYGFFPLSVDQKTMERMKNVLDIPATQLNISNSSLIGSLCVGNSNGLLVPNITTEKELELIKMFLKENSLDVNLERLKAKNTAFGNLILTNNKGCIISEELSRFRKTIEDVLDVESGVGNYAELPTVGSNGVATDKGCLVHPLTDELELEWIQDILRVDYVERGTANRGVTSVGACILANTKGAVVGGDTSGPEILKIEEALDLID.

The protein belongs to the eIF-6 family.

Its function is as follows. Binds to the 50S ribosomal subunit and prevents its association with the 30S ribosomal subunit to form the 70S initiation complex. The chain is Translation initiation factor 6 from Methanococcus maripaludis (strain DSM 14266 / JCM 13030 / NBRC 101832 / S2 / LL).